Consider the following 196-residue polypeptide: Large ribosomal subunit protein uL6 (196 aa).

This sequence belongs to the universal ribosomal protein uL6 family. As to quaternary structure, part of the 50S ribosomal subunit.

Functionally, this protein binds to the 23S rRNA, and is important in its secondary structure. It is located near the subunit interface in the base of the L7/L12 stalk, and near the tRNA binding site of the peptidyltransferase center. This Pyrobaculum aerophilum (strain ATCC 51768 / DSM 7523 / JCM 9630 / CIP 104966 / NBRC 100827 / IM2) protein is Large ribosomal subunit protein uL6.